The following is a 426-amino-acid chain: Probable imidazolonepropionase (426 aa).

2 residues coordinate 4-imidazolone-5-propanoate: Tyr-159 and His-192. An N-formimidoyl-L-glutamate-binding site is contributed by Tyr-159. Position 260 (His-260) interacts with Fe(3+). Residue His-260 participates in Zn(2+) binding. Position 263 (Glu-263) interacts with 4-imidazolone-5-propanoate. Position 334 (Asp-334) interacts with Fe(3+). Asp-334 contributes to the Zn(2+) binding site. Asn-336 is a binding site for N-formimidoyl-L-glutamate.

This sequence belongs to the metallo-dependent hydrolases superfamily. HutI family. The cofactor is Zn(2+). Fe(3+) is required as a cofactor.

It carries out the reaction 4-imidazolone-5-propanoate + H2O = N-formimidoyl-L-glutamate. Its pathway is amino-acid degradation; L-histidine degradation into L-glutamate; N-formimidoyl-L-glutamate from L-histidine: step 3/3. This Bos taurus (Bovine) protein is Probable imidazolonepropionase (AMDHD1).